Reading from the N-terminus, the 392-residue chain is Methylthioribose-1-phosphate isomerase (392 aa).

Residue Asp-253 is the Proton donor of the active site.

It belongs to the eIF-2B alpha/beta/delta subunits family. MtnA subfamily.

The protein resides in the cytoplasm. The protein localises to the nucleus. It carries out the reaction 5-(methylsulfanyl)-alpha-D-ribose 1-phosphate = 5-(methylsulfanyl)-D-ribulose 1-phosphate. Its pathway is amino-acid biosynthesis; L-methionine biosynthesis via salvage pathway; L-methionine from S-methyl-5-thio-alpha-D-ribose 1-phosphate: step 1/6. Catalyzes the interconversion of methylthioribose-1-phosphate (MTR-1-P) into methylthioribulose-1-phosphate (MTRu-1-P). This is Methylthioribose-1-phosphate isomerase (mri1) from Pyrenophora tritici-repentis (strain Pt-1C-BFP) (Wheat tan spot fungus).